The primary structure comprises 259 residues: MLDWNPALYRRYEDERTRPAQELLARVPLPEAARVVDLGCGPGNSTELLANRFPTAKVVGTDNSEAMLASARERLPQARFELSDIATWAPQDQAPDLIYANAALQWVPDHEQLIPRLFAALAPGGVLAIQMPDNREEPTHRLMRAVAAEAPWAEPIGNADRLRTLLLPLGGYYDLLAPAAARVDVWHTIYQHPMADAAAIVEWVRGTGLKPFVDRLPADLQASYLAEYERRVDQAYPVRTDGKRLLAFPRMFIVAQKKA.

It belongs to the methyltransferase superfamily. Tam family.

The protein resides in the cytoplasm. The catalysed reaction is trans-aconitate + S-adenosyl-L-methionine = (E)-3-(methoxycarbonyl)pent-2-enedioate + S-adenosyl-L-homocysteine. In terms of biological role, catalyzes the S-adenosylmethionine monomethyl esterification of trans-aconitate. This chain is Trans-aconitate 2-methyltransferase, found in Variovorax paradoxus (strain S110).